We begin with the raw amino-acid sequence, 103 residues long: Probable protease inhibitor Egf0.4a (103 aa).

Positions 1-22 are cleaved as a signal peptide; the sequence is MMSEKFALVLLVACIAFIGIET. The TIL domain maps to 35-87; it reads CGENEAYDSMRRGCEKRCDDHNPTFCFKFTTVCWCEKGYVRDKSDTCIKVEDC.

The protein belongs to the polydnaviridae EGF-like motif protein family.

The sequence is that of Probable protease inhibitor Egf0.4a (O4) from Microplitis demolitor (Parasitoid wasp).